A 389-amino-acid chain; its full sequence is Putative serine/threonine-protein kinase (389 aa).

A Protein kinase domain is found at 15-356; the sequence is YRIEKLINRG…LMVSNYLPWY (342 aa). Aspartate 164 serves as the catalytic Proton acceptor.

Belongs to the protein kinase superfamily. Ser/Thr protein kinase family.

It catalyses the reaction L-seryl-[protein] + ATP = O-phospho-L-seryl-[protein] + ADP + H(+). The catalysed reaction is L-threonyl-[protein] + ATP = O-phospho-L-threonyl-[protein] + ADP + H(+). The protein is Putative serine/threonine-protein kinase of Mycoplasma pneumoniae (strain ATCC 29342 / M129 / Subtype 1) (Mycoplasmoides pneumoniae).